Here is a 162-residue protein sequence, read N- to C-terminus: Probable ergosterol biosynthetic protein 28 homolog (162 aa).

The next 4 membrane-spanning stretches (helical) occupy residues 7–25, 40–60, 69–89, and 96–116; these read AWMS…MCYA, LSRA…VLIF, IAHI…VFFY, and IVTV…LTFL.

It belongs to the ERG28 family. In terms of tissue distribution, expressed in tissues including muscles, intestine and neurons.

The protein localises to the endoplasmic reticulum membrane. It is found in the cell projection. It localises to the dendrite. In terms of biological role, promotes the translocation of slo-1 potassium ion channels from the endoplasmic reticulum to its final destination at the plasma membrane, probably by shielding from premature proteasomal degradation in the endoplasmic reticulum. Maintains the levels of slo-1 potassium ion channel at the presynaptic neurons. This Caenorhabditis elegans protein is Probable ergosterol biosynthetic protein 28 homolog.